The primary structure comprises 340 residues: GPALPP motifs-containing protein 1 (340 aa).

Positions 1–304 are disordered; sequence MARDLIGPAL…PQERIPFDRD (304 aa). The residue at position 2 (alanine 2) is an N-acetylalanine. The short motif at 7 to 12 is the GPALPP motif 1 element; sequence GPALPP. Phosphoserine is present on serine 28. Positions 32–37 match the GPALPP motif 2 motif; sequence GPALPP. Acidic residues predominate over residues 60–69; it reads GNQESEEDDS. Positions 92–97 match the GPALPP motif 3 motif; it reads GPALPP. Serine 105 carries the phosphoserine modification. A compositionally biased stretch (pro residues) spans 107-116; the sequence is PRPIIGPALP. The short motif at 112 to 117 is the GPALPP motif 4 element; the sequence is GPALPP. A compositionally biased stretch (basic and acidic residues) spans 124 to 133; it reads QKSDKGRDDP. At threonine 138 the chain carries Phosphothreonine. Phosphoserine is present on residues serine 140 and serine 141. Basic and acidic residues-rich tracts occupy residues 163–187, 227–261, 269–279, and 287–304; these read EFEK…KPIV, PADR…KRLA, ESKRSESLMDI, and KAAE…FDRD. Lysine 271 participates in a covalent cross-link: Glycyl lysine isopeptide (Lys-Gly) (interchain with G-Cter in SUMO2). A Glycyl lysine isopeptide (Lys-Gly) (interchain with G-Cter in SUMO2) cross-link involves residue lysine 308.

The polypeptide is GPALPP motifs-containing protein 1 (GPALPP1) (Homo sapiens (Human)).